The sequence spans 243 residues: tRNA (guanine-N(1)-)-methyltransferase (243 aa).

S-adenosyl-L-methionine contacts are provided by residues Gly110 and 130-135; that span reads VGDYVM.

It belongs to the RNA methyltransferase TrmD family. Homodimer.

It localises to the cytoplasm. It catalyses the reaction guanosine(37) in tRNA + S-adenosyl-L-methionine = N(1)-methylguanosine(37) in tRNA + S-adenosyl-L-homocysteine + H(+). In terms of biological role, specifically methylates guanosine-37 in various tRNAs. This Treponema denticola (strain ATCC 35405 / DSM 14222 / CIP 103919 / JCM 8153 / KCTC 15104) protein is tRNA (guanine-N(1)-)-methyltransferase.